We begin with the raw amino-acid sequence, 150 residues long: D-aminoacyl-tRNA deacylase (150 aa).

The Gly-cisPro motif, important for rejection of L-amino acids signature appears at 133–134 (GP).

This sequence belongs to the DTD family. In terms of assembly, homodimer.

Its subcellular location is the cytoplasm. The catalysed reaction is glycyl-tRNA(Ala) + H2O = tRNA(Ala) + glycine + H(+). It carries out the reaction a D-aminoacyl-tRNA + H2O = a tRNA + a D-alpha-amino acid + H(+). In terms of biological role, an aminoacyl-tRNA editing enzyme that deacylates mischarged D-aminoacyl-tRNAs. Also deacylates mischarged glycyl-tRNA(Ala), protecting cells against glycine mischarging by AlaRS. Acts via tRNA-based rather than protein-based catalysis; rejects L-amino acids rather than detecting D-amino acids in the active site. By recycling D-aminoacyl-tRNA to D-amino acids and free tRNA molecules, this enzyme counteracts the toxicity associated with the formation of D-aminoacyl-tRNA entities in vivo and helps enforce protein L-homochirality. This is D-aminoacyl-tRNA deacylase from Micrococcus luteus (strain ATCC 4698 / DSM 20030 / JCM 1464 / CCM 169 / CCUG 5858 / IAM 1056 / NBRC 3333 / NCIMB 9278 / NCTC 2665 / VKM Ac-2230) (Micrococcus lysodeikticus).